Reading from the N-terminus, the 198-residue chain is MNGAQVIIQEINREAEQKIKYILDEARKEAEKIKEEARKRGESRAEWILRKAKTQAELEKQRIIATARLEVRRKKLSLQEEYISRVLKEVTSRLSNLSEDEYLETVLALLKEALKELDVKEIRVHSNEKTLALISSRIEEIRRELGDVSIEIGSPIQTIGGVIVETKDGNMRVDNTFEARMARLESELRSKIAEILFG.

It belongs to the V-ATPase E subunit family. Has multiple subunits with at least A(3), B(3), C, D, E, F, H, I and proteolipid K(x).

Its subcellular location is the cell membrane. Component of the A-type ATP synthase that produces ATP from ADP in the presence of a proton gradient across the membrane. The chain is A-type ATP synthase subunit E from Pyrococcus furiosus (strain ATCC 43587 / DSM 3638 / JCM 8422 / Vc1).